The primary structure comprises 277 residues: Large ribosomal subunit protein uL2 (277 aa).

The disordered stretch occupies residues 219–277 (TVRGSVMNPNDHPHGGGEGKAPVGRKAPSTPWGKPALGLKTRNKKAKSDKLIVRRRNEK). Positions 264–277 (AKSDKLIVRRRNEK) are enriched in basic and acidic residues.

This sequence belongs to the universal ribosomal protein uL2 family. As to quaternary structure, part of the 50S ribosomal subunit. Forms a bridge to the 30S subunit in the 70S ribosome.

One of the primary rRNA binding proteins. Required for association of the 30S and 50S subunits to form the 70S ribosome, for tRNA binding and peptide bond formation. It has been suggested to have peptidyltransferase activity; this is somewhat controversial. Makes several contacts with the 16S rRNA in the 70S ribosome. This chain is Large ribosomal subunit protein uL2, found in Streptococcus pyogenes serotype M1.